Reading from the N-terminus, the 266-residue chain is Thiazole synthase (266 aa).

The Schiff-base intermediate with DXP role is filled by K106. Residues G167, 193–194, and 215–216 each bind 1-deoxy-D-xylulose 5-phosphate; these read AG and NT.

The protein belongs to the ThiG family. As to quaternary structure, homotetramer. Forms heterodimers with either ThiH or ThiS.

The protein localises to the plastid. Its subcellular location is the chloroplast. The catalysed reaction is [ThiS sulfur-carrier protein]-C-terminal-Gly-aminoethanethioate + 2-iminoacetate + 1-deoxy-D-xylulose 5-phosphate = [ThiS sulfur-carrier protein]-C-terminal Gly-Gly + 2-[(2R,5Z)-2-carboxy-4-methylthiazol-5(2H)-ylidene]ethyl phosphate + 2 H2O + H(+). Its pathway is cofactor biosynthesis; thiamine diphosphate biosynthesis. Functionally, catalyzes the rearrangement of 1-deoxy-D-xylulose 5-phosphate (DXP) to produce the thiazole phosphate moiety of thiamine. Sulfur is provided by the thiocarboxylate moiety of the carrier protein ThiS. In vitro, sulfur can be provided by H(2)S. This Cyanidium caldarium (Red alga) protein is Thiazole synthase.